The following is a 757-amino-acid chain: Protein hunchback (757 aa).

Disordered regions lie at residues 30–51 and 171–213; these read EPGH…PIPS and EKLQ…EDMK. Residues 39-51 show a composition bias toward polar residues; the sequence is SVASSPRQSPIPS. A compositionally biased stretch (basic and acidic residues) spans 197–213; the sequence is EPEKEHDQMSNSSEDMK. C2H2-type zinc fingers lie at residues 239 to 261, 268 to 290, 296 to 318, and 324 to 348; these read YKCK…TRTH, LQCP…IRKH, FQCD…RKSH, and YRCA…KYGH. Disordered stretches follow at residues 367–416, 511–535, and 602–694; these read DVYG…VATS, EQLQ…YERK, and MTSP…APPS. Low complexity-rich tracts occupy residues 397–414 and 512–521; these read VAAV…QPVA and QLQQQNQQQS. Residues 522-531 show a composition bias toward acidic residues; sequence DNEEEDQDDE. Low complexity predominate over residues 651 to 694; it reads ANTSASSTASSSGNSSNASSNSNGNSSSNSSSNGTTSAVAAPPS. C2H2-type zinc fingers lie at residues 704-726 and 732-756; these read YECK…MGYH and FKCN…RNAH.

The protein belongs to the hunchback C2H2-type zinc-finger protein family.

The protein resides in the nucleus. Gap class segmentation protein that controls development of head structures. The chain is Protein hunchback (hb) from Drosophila sechellia (Fruit fly).